The sequence spans 383 residues: Putative glutamate--cysteine ligase 2-1 (383 aa).

This sequence belongs to the glutamate--cysteine ligase type 2 family. YbdK subfamily.

The enzyme catalyses L-cysteine + L-glutamate + ATP = gamma-L-glutamyl-L-cysteine + ADP + phosphate + H(+). Functionally, ATP-dependent carboxylate-amine ligase which exhibits weak glutamate--cysteine ligase activity. The sequence is that of Putative glutamate--cysteine ligase 2-1 from Nocardia farcinica (strain IFM 10152).